Here is a 495-residue protein sequence, read N- to C-terminus: Leucine aminopeptidase 2 (495 aa).

An N-terminal signal peptide occupies residues 1-21 (MKSQLLSLAVAVSTISQGVVG). Residues 124–218 (PPANKIMAEL…EDGKNLASLV (95 aa)) enclose the PA domain. N-linked (GlcNAc...) asparagine glycosylation is found at Asn-142 and Asn-235. Zn(2+) contacts are provided by His-259 and Asp-271. N-linked (GlcNAc...) asparagine glycosylation occurs at Asn-272. Glu-303 serves as the catalytic Proton acceptor. Residues Glu-304 and Asp-332 each coordinate Zn(2+). Asn-352 carries an N-linked (GlcNAc...) asparagine glycan. His-430 contacts Zn(2+).

The protein belongs to the peptidase M28 family. M28A subfamily. Monomer. Zn(2+) serves as cofactor.

It localises to the secreted. Extracellular aminopeptidase that releases a wide variety of amino acids from natural peptides and contributes to pathogenicity. This Trichophyton tonsurans (Scalp ringworm fungus) protein is Leucine aminopeptidase 2 (LAP2).